A 289-amino-acid polypeptide reads, in one-letter code: Diaminopimelate epimerase (289 aa).

Substrate is bound by residues N17, Q47, and N67. Catalysis depends on C76, which acts as the Proton donor. Residues 77–78, N164, N198, and 216–217 each bind substrate; these read GN and ER. The active-site Proton acceptor is the C225. 226–227 contacts substrate; that stretch reads GS.

The protein belongs to the diaminopimelate epimerase family. In terms of assembly, homodimer.

The protein resides in the cytoplasm. It carries out the reaction (2S,6S)-2,6-diaminopimelate = meso-2,6-diaminopimelate. It functions in the pathway amino-acid biosynthesis; L-lysine biosynthesis via DAP pathway; DL-2,6-diaminopimelate from LL-2,6-diaminopimelate: step 1/1. Functionally, catalyzes the stereoinversion of LL-2,6-diaminopimelate (L,L-DAP) to meso-diaminopimelate (meso-DAP), a precursor of L-lysine and an essential component of the bacterial peptidoglycan. The chain is Diaminopimelate epimerase from Bradyrhizobium sp. (strain BTAi1 / ATCC BAA-1182).